The sequence spans 488 residues: 3-octaprenyl-4-hydroxybenzoate carboxy-lyase (488 aa).

Asn172 contacts Mn(2+). Residues 175-177 (IYR), 189-191 (RWL), and 194-195 (RG) contribute to the prenylated FMN site. Glu238 serves as a coordination point for Mn(2+). Asp287 acts as the Proton donor in catalysis.

The protein belongs to the UbiD family. As to quaternary structure, homohexamer. Requires prenylated FMN as cofactor. Mn(2+) serves as cofactor.

It localises to the cell membrane. It carries out the reaction a 4-hydroxy-3-(all-trans-polyprenyl)benzoate + H(+) = a 2-(all-trans-polyprenyl)phenol + CO2. Its pathway is cofactor biosynthesis; ubiquinone biosynthesis. Functionally, catalyzes the decarboxylation of 3-octaprenyl-4-hydroxy benzoate to 2-octaprenylphenol, an intermediate step in ubiquinone biosynthesis. In Ectopseudomonas mendocina (strain ymp) (Pseudomonas mendocina), this protein is 3-octaprenyl-4-hydroxybenzoate carboxy-lyase.